A 202-amino-acid polypeptide reads, in one-letter code: B-cell CLL/lymphoma 7 protein family member B (202 aa).

Positions 53–202 (DSKEKEKSKS…PTVPQTASES (150 aa)) are disordered. Over residues 90–99 (ENSNQSSVSD) the composition is skewed to polar residues. The segment covering 107–123 (SSTNSSPSPQQSESLSP) has biased composition (low complexity). A phosphoserine mark is found at Ser-114, Ser-118, Ser-120, Ser-122, Ser-127, Ser-148, and Ser-152.

Belongs to the BCL7 family. As to expression, ubiquitous.

Positive regulator of apoptosis. Plays a role in the Wnt signaling pathway, negatively regulating the expression of Wnt signaling components CTNNB1 and HMGA1. Involved in cell cycle progression, maintenance of the nuclear structure and stem cell differentiation. May play a role in lung tumor development or progression. This chain is B-cell CLL/lymphoma 7 protein family member B (BCL7B), found in Homo sapiens (Human).